The following is a 184-amino-acid chain: MAEPIQVAEEKMKKAIETLKEEFATIRAGRANPHILDKVMVDYYGVPTPIPQVASITVPEARMIVIQPWEARMLKEIEKAIQKSDLGVNPTNDGKVIRLIFPELTEERRKELVKQVKKMAEDAKVAIRNIRREALDEYKKMKKNNEITEDDLKDAEEDVQKLHDKYIEQIEKLLSAKEKEIMEV.

This sequence belongs to the RRF family.

It localises to the cytoplasm. Functionally, responsible for the release of ribosomes from messenger RNA at the termination of protein biosynthesis. May increase the efficiency of translation by recycling ribosomes from one round of translation to another. The sequence is that of Ribosome-recycling factor from Caldicellulosiruptor bescii (strain ATCC BAA-1888 / DSM 6725 / KCTC 15123 / Z-1320) (Anaerocellum thermophilum).